A 760-amino-acid chain; its full sequence is Catalase-peroxidase (760 aa).

The segment at 1-24 (MAESKCPFKSQGSRSNVAGGGTRN) is disordered. The segment at residues 96–242 (WHSAGTYRVF…LAAAHMGLIY (147 aa)) is a cross-link (tryptophyl-tyrosyl-methioninium (Trp-Tyr) (with M-268)). Residue histidine 97 is the Proton acceptor of the active site. Positions 242–268 (YVNPEGPDGNPDPVAAAHDIRVTFGRM) form a cross-link, tryptophyl-tyrosyl-methioninium (Tyr-Met) (with W-96). Histidine 283 contributes to the heme b binding site.

This sequence belongs to the peroxidase family. Peroxidase/catalase subfamily. As to quaternary structure, homodimer or homotetramer. Requires heme b as cofactor. Post-translationally, formation of the three residue Trp-Tyr-Met cross-link is important for the catalase, but not the peroxidase activity of the enzyme.

The protein localises to the cytoplasm. The enzyme catalyses H2O2 + AH2 = A + 2 H2O. It carries out the reaction 2 H2O2 = O2 + 2 H2O. Functionally, bifunctional enzyme with both catalase and broad-spectrum peroxidase activity. The protein is Catalase-peroxidase of Aspergillus clavatus (strain ATCC 1007 / CBS 513.65 / DSM 816 / NCTC 3887 / NRRL 1 / QM 1276 / 107).